Reading from the N-terminus, the 399-residue chain is Ankyrin repeat domain-containing protein 65 (399 aa).

ANK repeat units follow at residues 40–69, 73–102, 106–135, 139–168, 176–205, 207–231, 235–264, 268–297, 301–330, and 334–363; these read QGWGHLLQAVWRGPAGLVTQLLRQGASVEE, AGRTPLHLAVLRGHAPLVRLLLQRGAPVGA, AGRTALHEAAWHGHSRVAELLLQRGASAAA, TGLTPLHWAAALGHTLLAARLLEAPGPGPA, RGWTAAHWAAAGGRLAVLELLAAGGAGLDG, LLVAAAAGRGAALRFLLARGARVDA, AGATALGLAAALGRSQDIEVLLGHGADPGI, HGRSALHRAAARGHLLAVQLLVTQGAEVDA, LGLTPLHHASREGHVEVAGCLLDRGAQVDA, and LRKTPLHLAAERGHGPTVGLLLSRGASPTL. The interval 377–399 is disordered; it reads DLPQALPELGGGEKECEGIESTG.

This chain is Ankyrin repeat domain-containing protein 65 (ANKRD65), found in Homo sapiens (Human).